We begin with the raw amino-acid sequence, 315 residues long: MNLAYIPSPTFSKFEIGPFTIHMYAICILIGICVAVWILATRWKRYGGTFDQILDTTLVTVPCALVGARLYHCITTPADYFPPTGNLVNILKVWEGGMAIFGGISVGTLVAFLWCRHKHYPFAIFADAIAPALPVAQAIGRLGNWFNQELYGWPTTLPWGLKLNDADAIGKSEICYSGAQCPDYRTTLFHPTFLYEMIWNLIGAALIIYLGHKLADRLKAGQQFAMYLMWYGLGRTWIENVRINYSTVILGLRTNVWTAIIVFVLGCILFVVLYQYGPDPKAQARGLAAVTADELERQSIEEEQLRQKKQTNRTK.

2 helical membrane-spanning segments follow: residues 19 to 39 (FTIHMYAICILIGICVAVWIL) and 93 to 113 (VWEGGMAIFGGISVGTLVAFL). Residue R141 coordinates a 1,2-diacyl-sn-glycero-3-phospho-(1'-sn-glycerol). 2 helical membrane passes run 188–208 (LFHPTFLYEMIWNLIGAALII) and 256–276 (VWTAIIVFVLGCILFVVLYQY).

It belongs to the Lgt family.

The protein resides in the cell membrane. The enzyme catalyses L-cysteinyl-[prolipoprotein] + a 1,2-diacyl-sn-glycero-3-phospho-(1'-sn-glycerol) = an S-1,2-diacyl-sn-glyceryl-L-cysteinyl-[prolipoprotein] + sn-glycerol 1-phosphate + H(+). It functions in the pathway protein modification; lipoprotein biosynthesis (diacylglyceryl transfer). Its function is as follows. Catalyzes the transfer of the diacylglyceryl group from phosphatidylglycerol to the sulfhydryl group of the N-terminal cysteine of a prolipoprotein, the first step in the formation of mature lipoproteins. This is Phosphatidylglycerol--prolipoprotein diacylglyceryl transferase from Bifidobacterium longum (strain NCC 2705).